A 337-amino-acid chain; its full sequence is UDP-3-O-acylglucosamine N-acyltransferase (337 aa).

His-238 functions as the Proton acceptor in the catalytic mechanism.

It belongs to the transferase hexapeptide repeat family. LpxD subfamily. In terms of assembly, homotrimer.

The catalysed reaction is a UDP-3-O-[(3R)-3-hydroxyacyl]-alpha-D-glucosamine + a (3R)-hydroxyacyl-[ACP] = a UDP-2-N,3-O-bis[(3R)-3-hydroxyacyl]-alpha-D-glucosamine + holo-[ACP] + H(+). The protein operates within bacterial outer membrane biogenesis; LPS lipid A biosynthesis. Its function is as follows. Catalyzes the N-acylation of UDP-3-O-acylglucosamine using 3-hydroxyacyl-ACP as the acyl donor. Is involved in the biosynthesis of lipid A, a phosphorylated glycolipid that anchors the lipopolysaccharide to the outer membrane of the cell. This chain is UDP-3-O-acylglucosamine N-acyltransferase, found in Xanthomonas euvesicatoria pv. vesicatoria (strain 85-10) (Xanthomonas campestris pv. vesicatoria).